A 2214-amino-acid polypeptide reads, in one-letter code: Non-reducing polyketide synthase dpmpA (2214 aa).

Residues 75-178 (EWIRTGDSHV…LAVCAGAWKD (104 aa)) form an N-terminal acylcarrier protein transacylase domain (SAT) region. Positions 372–784 (DESIAIVGAS…GNNTAMIVCQ (413 aa)) constitute a Ketosynthase family 3 (KS3) domain. Residues Cys532, His667, and His707 each act as for beta-ketoacyl synthase activity in the active site. The tract at residues 888–1184 (VFAGQTGHRP…AFLSARLGSP (297 aa)) is malonyl-CoA:ACP transacylase (MAT) domain. Ser974 acts as the For acyl/malonyl transferase activity in catalysis. The N-terminal hotdog fold stretch occupies residues 1255–1389 (PQLVSVVRSS…GIIKSQEQDR (135 aa)). Positions 1255 to 1566 (PQLVSVVRSS…FSKVPVRSLQ (312 aa)) constitute a PKS/mFAS DH domain. The product template (PT) domain stretch occupies residues 1265-1560 (GGADPEAAEF…AILGARFSKV (296 aa)). Positions 1416–1566 (GASVVQGAFV…FSKVPVRSLQ (151 aa)) are C-terminal hotdog fold. 2 consecutive Carrier domains span residues 1620–1695 (NEVK…HSRL) and 1722–1802 (KAST…SGAD). At Ser1654 the chain carries O-(pantetheine 4'-phosphoryl)serine. A disordered region spans residues 1698–1728 (VPQLSPHDTDRSSDLSAGQPPSTPKASTQEQ). Positions 1711–1726 (DLSAGQPPSTPKASTQ) are enriched in polar residues. O-(pantetheine 4'-phosphoryl)serine is present on Ser1762. The interval 1805–1827 (GFPRTSDNRRSEEGSVGHVGPEK) is disordered. Positions 1810–1827 (SDNRRSEEGSVGHVGPEK) are enriched in basic and acidic residues. A methyltransferase (CMeT) domain region spans residues 1958-2210 (FPAYRPDHRL…SREADLFRWI (253 aa)).

Its pathway is secondary metabolite biosynthesis; terpenoid biosynthesis. Non-reducing polyketide synthase; part of the gene cluster that mediates the biosynthesis of diterpenoid pyrones. The first step of the pathway is the synthesis of the alpha-pyrone moiety by the polyketide synthase dpmpA via condensation of one acetyl-CoA starter unit with 3 malonyl-CoA units and 2 methylations. The alpha-pyrone is then combined with geranylgeranyl pyrophosphate (GGPP) formed by the GGPP synthase dpmpD through the action of the prenyltransferase dpmpC to yield a linear alpha-pyrone diterpenoid. Subsequent steps in the diterpenoid pyrone biosynthetic pathway involve the decalin core formation, which is initiated by the epoxidation of the C10-C11 olefin by the FAD-dependent oxidoreductase dpmpE, and is followed by a cyclization cascade catalyzed by the terpene cyclase dpmpB. The short chain dehydrogenase/reductase dpmpG then oxidizes the 8S hydroxy group to a ketone and the short chain dehydrogenase/reductase dpmpH reduces the ketone to the 8R hydroxy group to yield higginsianin B. Higginsianin B is further methylated by the methyltransferase dpmpI to produce the intermediate named FDDP B. The cytochrome P450 monooxygenase dpmpJ then oxidizes the C-26 methyl to primary alcohol, producing the final diterpenoid pyrone with a C-26 primary alcohol on the gamma-pyrone moiety named FDDP C. The polypeptide is Non-reducing polyketide synthase dpmpA (Macrophomina phaseolina (strain MS6) (Charcoal rot fungus)).